The primary structure comprises 2620 residues: Ankyrin repeat and KH domain-containing protein mask-1 (2620 aa).

ANK repeat units lie at residues 254-283 (SKIT…DPNV), 288-318 (NCNT…KKPD), 361-390 (ERDS…KNPP), 402-431 (ERYS…PADL), 437-466 (IEPS…KIEE), 470-502 (KKNT…EVDV), 507-536 (TGDT…DLTA), 538-566 (KTSP…TIPQ), 568-597 (QLSR…DLNF), 600-629 (DERT…SVNF), 634-663 (NDAT…DPML), and 667-697 (DGVN…NMPM). Disordered regions lie at residues 699-726 (KDPP…SGQD), 994-1032 (HQEE…QPGA), and 1192-1229 (SLMA…AIDK). Residues 1012–1029 (TSLTAPNPADTSDVTTKQ) show a composition bias toward polar residues. Residues 1192–1206 (SLMAKSVQSQQQQGQ) are compositionally biased toward low complexity. Basic and acidic residues predominate over residues 1210–1221 (THSEGDGAERAK). 10 ANK repeats span residues 1234 to 1263 (TLET…NIEH), 1267 to 1296 (KGFS…AIEA), 1301 to 1330 (TKDT…NKEH), 1334 to 1363 (SDYT…EINS), 1369 to 1398 (LGIS…DINA), 1403 to 1432 (NRNT…NVEH), 1436 to 1465 (TGLT…DTNA), 1471 to 1500 (TKDT…AVDV), 1504 to 1533 (KGCT…DPDM), and 1537 to 1566 (RKIS…QFPN). Positions 1596–1648 (AKKAQAESAELAAQKLLELIDEEKVQKEVKKQKQKDKKIKKKEEKKIKKQEAE) form a coiled coil. Disordered stretches follow at residues 1621 to 1720 (QKEV…AEEP) and 1759 to 1804 (KEGK…EIDT). Residues 1636 to 1647 (KKEEKKIKKQEA) are compositionally biased toward basic and acidic residues. A compositionally biased stretch (acidic residues) spans 1648 to 1661 (EPEPEPEPEPEPVP). 2 stretches are compositionally biased toward low complexity: residues 1665–1681 (PVVI…IVVE) and 1769–1791 (KSGY…TTSS). The KH domain occupies 1807-1873 (ESSWKLTIPA…EMVRYAMNII (67 aa)). Positions 1899-1913 (ASSFSSEGTSKSAVD) are enriched in polar residues. 8 disordered regions span residues 1899-1962 (ASSF…GNVW), 1976-2010 (LMET…QASE), 2067-2143 (SVQS…QTQN), 2267-2294 (NATS…VTTG), 2307-2343 (SFAP…QQQQ), 2372-2391 (QHQS…KFSM), 2429-2448 (QESS…NSYY), and 2496-2620 (QKKQ…SSNW). The segment covering 1917 to 1946 (APSSIPKSLSSASIARQSASPIPQQSSQRS) has biased composition (low complexity). The span at 1982 to 1993 (ISQSPKQAPQIP) shows a compositional bias: polar residues. Low complexity-rich tracts occupy residues 1994 to 2006 (STQQ…SRQD), 2067 to 2078 (SVQSVQHMQQQQ), and 2100 to 2118 (SQPI…SSFS). Composition is skewed to polar residues over residues 2267-2286 (NATS…VQQP) and 2325-2339 (RSQS…STNI). Over residues 2505–2528 (SFMHNSQQPQPFGAPSNASANQSR) the composition is skewed to polar residues. The segment covering 2535-2547 (RPQPPPFVAPQAP) has biased composition (pro residues). The span at 2552-2565 (SLGNASSTTNPSRT) shows a compositional bias: polar residues. Low complexity-rich tracts occupy residues 2566–2588 (SMQQ…QMPQ) and 2597–2620 (QQQQ…SSNW).

It belongs to the mask family.

It localises to the cytoplasm. The chain is Ankyrin repeat and KH domain-containing protein mask-1 from Caenorhabditis elegans.